A 296-amino-acid chain; its full sequence is Transcription factor Pur-alpha 1 (296 aa).

N-acetylmethionine is present on methionine 1. Disordered stretches follow at residues 1–25 (MEAN…GGGG) and 186–214 (IPGH…EETG). Serine 207 carries the post-translational modification Phosphoserine.

Belongs to the PUR DNA-binding protein family. In terms of assembly, homodimer. Interacts with TCP20.

It localises to the nucleus. In terms of biological role, transcription factor that specifically binds the purine-rich double-stranded telomeric repeated sequence 5'-AAACCCTAA-3' found in promoter telo boxes. This Arabidopsis thaliana (Mouse-ear cress) protein is Transcription factor Pur-alpha 1 (PURA1).